Reading from the N-terminus, the 710-residue chain is Choline transporter-like protein 2 (710 aa).

The Cytoplasmic portion of the chain corresponds to 1 to 34 (MEDDGKSPPDSAYGEPKKYDPNFKGPIQNRGCTD). A helical membrane pass occupies residues 35–55 (ILCCILIVLGIIAYVAVGIVA). Residues 56–236 (WTYGDPRKVI…KIFEDYTVSW (181 aa)) lie on the Extracellular side of the membrane. 3 N-linked (GlcNAc...) asparagine glycosylation sites follow: N147, N190, and N204. The chain crosses the membrane as a helical span at residues 237-257 (YWIIIGLIIAMVISLIFVVLL). At 258–260 (RFL) the chain is on the cytoplasmic side. A helical membrane pass occupies residues 261-281 (AGIMVWVMIVLVIAVMGYGIF). Residues 282–319 (HCYMEYARLKGQSGSDVTLKDIGFQTDIRVYLHLRQTW) are Extracellular-facing. Residues 320–340 (LAFMIILCILEVIVILLLIFL) traverse the membrane as a helical segment. Residues 341-368 (RKRIMIAIALIKEASRAVGFVMSSLVFP) lie on the Cytoplasmic side of the membrane. The helical transmembrane segment at 369-389 (LFTFLLVCLCIAYWAITAVFL) threads the bilayer. Over 390–458 (STSNEAVYKV…FQIYNAFMFL (69 aa)) the chain is Extracellular. N-linked (GlcNAc...) asparagine glycans are attached at residues N401, N418, and N421. Residues 459–481 (WLANFVIALGQVTLAGAFASYYW) form a helical membrane-spanning segment. The Cytoplasmic portion of the chain corresponds to 482–508 (AFKKPDDMPAFPIFSSLGRALRYHTGS). The chain crosses the membrane as a helical span at residues 509–529 (LAFGSLILAIVQMIRILLEYL). Residues 530–567 (DHKLKGADNKCARFLLCCLKCCFWCLEKFIKFLNRNAY) are Extracellular-facing. The chain crosses the membrane as a helical span at residues 568-588 (IMIAIYGTNFCTSARNAFFLL). Residues 589–603 (MRNIIRVAVLDKVTD) lie on the Cytoplasmic side of the membrane. Residues 604 to 624 (FLLFLGKLLVVGCVGILAFFF) form a helical membrane-spanning segment. Residues 625-642 (FSRRIQIVQDTAPTLNYY) are Extracellular-facing. Residues 643–663 (WVPILTVILGSYLIAHGFFSV) form a helical membrane-spanning segment. Residues 664–710 (YGMCVDTLFLCFLEDLERNDGSTERPYFMSGSLQKLLNKSNQTKPDK) lie on the Cytoplasmic side of the membrane.

This sequence belongs to the CTL (choline transporter-like) family.

The protein resides in the cell membrane. Its subcellular location is the mitochondrion outer membrane. The catalysed reaction is choline(out) + n H(+)(in) = choline(in) + n H(+)(out). It carries out the reaction ethanolamine(out) + n H(+)(in) = ethanolamine(in) + n H(+)(out). Choline/H+ antiporter, mainly in mitochodria. Also acts as a low-affinity ethanolamine/H+ antiporter, regulating the supply of extracellular ethanolamine (Etn) for the CDP-Etn pathway, redistribute intracellular Etn and balance the CDP-Cho and CDP-Etn arms of the Kennedy pathway. The sequence is that of Choline transporter-like protein 2 (slc44a2) from Xenopus laevis (African clawed frog).